Here is a 347-residue protein sequence, read N- to C-terminus: D-alanine--D-alanine ligase (347 aa).

In terms of domain architecture, ATP-grasp spans 134-332; the sequence is KLYAKDLGVK…LAQSLPKTPK (199 aa). 161 to 216 lines the ATP pocket; it reads LIKFNFPFIVKPSNAGSSLGVNVVKEEKELVYALDSAFEYSKEVLIEPFIQGVKEY. Mg(2+) is bound by residues Asp288, Glu300, and Asn302.

The protein belongs to the D-alanine--D-alanine ligase family. Requires Mg(2+) as cofactor. It depends on Mn(2+) as a cofactor.

The protein resides in the cytoplasm. It carries out the reaction 2 D-alanine + ATP = D-alanyl-D-alanine + ADP + phosphate + H(+). Its pathway is cell wall biogenesis; peptidoglycan biosynthesis. Cell wall formation. In Helicobacter pylori (strain P12), this protein is D-alanine--D-alanine ligase.